A 411-amino-acid polypeptide reads, in one-letter code: Creatinase (411 aa).

The active site involves histidine 240.

It belongs to the peptidase M24 family. Creatinase subfamily. Homodimer.

The enzyme catalyses creatine + H2O = sarcosine + urea. The sequence is that of Creatinase from Bacillus sp. (strain B-0618).